The primary structure comprises 352 residues: Heat-inducible transcription repressor HrcA (352 aa).

Belongs to the HrcA family.

Functionally, negative regulator of class I heat shock genes (grpE-dnaK-dnaJ and groELS operons). Prevents heat-shock induction of these operons. The polypeptide is Heat-inducible transcription repressor HrcA (Ralstonia nicotianae (strain ATCC BAA-1114 / GMI1000) (Ralstonia solanacearum)).